Reading from the N-terminus, the 67-residue chain is MARITVEDCLKQIPNRFELALAATYRARQLAQGHTPKIESRDKPTVVALREIAAGQVGVEMLKKVPA.

This sequence belongs to the RNA polymerase subunit omega family. The RNAP catalytic core consists of 2 alpha, 1 beta, 1 beta' and 1 omega subunit. When a sigma factor is associated with the core the holoenzyme is formed, which can initiate transcription.

The catalysed reaction is RNA(n) + a ribonucleoside 5'-triphosphate = RNA(n+1) + diphosphate. In terms of biological role, promotes RNA polymerase assembly. Latches the N- and C-terminal regions of the beta' subunit thereby facilitating its interaction with the beta and alpha subunits. The sequence is that of DNA-directed RNA polymerase subunit omega from Burkholderia pseudomallei (strain 1106a).